The chain runs to 466 residues: Replication termination factor 1 (466 aa).

DNA-binding domain regions lie at residues 94 to 249 (RDYT…LRRK) and 250 to 421 (YNPF…KKTL). 2 HTH myb-type domains span residues 251 to 304 (NPFK…QPGE) and 305 to 363 (INRS…SRDI). DNA-binding regions (H-T-H motif) lie at residues 278–300 (WSLI…RDYI) and 336–359 (WSLI…YTLI).

Its subcellular location is the nucleus. Its function is as follows. Mediates site-specific replication termination at the polar replication barrier RTS1, a barrier which ensures that replication of the mat1 locus in S.pombe occurs in the centromere-proximal direction. The sequence is that of Replication termination factor 1 (rtf1) from Schizosaccharomyces pombe (strain 972 / ATCC 24843) (Fission yeast).